A 290-amino-acid polypeptide reads, in one-letter code: Probable endonuclease 4 (290 aa).

9 residues coordinate Zn(2+): His-66, His-106, Glu-143, Asp-179, His-182, His-216, Asp-229, His-231, and Glu-261.

It belongs to the AP endonuclease 2 family. It depends on Zn(2+) as a cofactor.

It carries out the reaction Endonucleolytic cleavage to 5'-phosphooligonucleotide end-products.. In terms of biological role, endonuclease IV plays a role in DNA repair. It cleaves phosphodiester bonds at apurinic or apyrimidinic (AP) sites, generating a 3'-hydroxyl group and a 5'-terminal sugar phosphate. In Solibacter usitatus (strain Ellin6076), this protein is Probable endonuclease 4.